The primary structure comprises 115 residues: Large ribosomal subunit protein bL19 (115 aa).

It belongs to the bacterial ribosomal protein bL19 family.

This protein is located at the 30S-50S ribosomal subunit interface and may play a role in the structure and function of the aminoacyl-tRNA binding site. The polypeptide is Large ribosomal subunit protein bL19 (Alkaliphilus oremlandii (strain OhILAs) (Clostridium oremlandii (strain OhILAs))).